A 443-amino-acid chain; its full sequence is Clustered-asparagine-rich protein (443 aa).

The 91-residue stretch at 16–106 folds into the RRM 1 domain; it reads TKLHIQNIPP…RNIDAKFAVP (91 aa). The interval 253 to 279 is disordered; the sequence is NHLNNNNNNINNNNNNNNNNNNNNNVM. Residues 256–277 are compositionally biased toward low complexity; the sequence is NNNNNNINNNNNNNNNNNNNNN. Residues 342–435 form the RRM 2 domain; the sequence is SSITIMKKQN…KYLKVQLKKG (94 aa).

This chain is Clustered-asparagine-rich protein, found in Plasmodium falciparum.